The sequence spans 67 residues: UPF0434 protein RALTA_A0561 (67 aa).

It belongs to the UPF0434 family.

The protein is UPF0434 protein RALTA_A0561 of Cupriavidus taiwanensis (strain DSM 17343 / BCRC 17206 / CCUG 44338 / CIP 107171 / LMG 19424 / R1) (Ralstonia taiwanensis (strain LMG 19424)).